Reading from the N-terminus, the 165-residue chain is Cytochrome c-type biogenesis protein CcmE (165 aa).

Topologically, residues 1–7 (MTRKQKR) are cytoplasmic. The chain crosses the membrane as a helical; Signal-anchor for type II membrane protein span at residues 8 to 28 (LAIIGGGMSFIVAAVLLVMFA). Residues 29 to 165 (FGQSIAYFYM…ASGDKTGATK (137 aa)) lie on the Periplasmic side of the membrane. Residues His-123 and Tyr-127 each coordinate heme. The segment at 138–165 (DKGLWQQGAEGAAPAASAASGDKTGATK) is disordered. A compositionally biased stretch (low complexity) spans 145-158 (GAEGAAPAASAASG).

Belongs to the CcmE/CycJ family.

It localises to the cell inner membrane. Its function is as follows. Heme chaperone required for the biogenesis of c-type cytochromes. Transiently binds heme delivered by CcmC and transfers the heme to apo-cytochromes in a process facilitated by CcmF and CcmH. The polypeptide is Cytochrome c-type biogenesis protein CcmE (Agrobacterium fabrum (strain C58 / ATCC 33970) (Agrobacterium tumefaciens (strain C58))).